Reading from the N-terminus, the 252-residue chain is Protein PYRAB15930 (252 aa).

This sequence belongs to the CinA family.

The protein is Protein PYRAB15930 of Pyrococcus abyssi (strain GE5 / Orsay).